A 106-amino-acid polypeptide reads, in one-letter code: MVREFYVTGRGRKLLPTVFRIKSFHGIVRQCVKQQRDFTSFLASSPAMGVAQGQQVKLILMLLIETWETKHQSCHSHFILLEFTHLFVRKFSQIFFEFRLFAHLLS.

This is an uncharacterized protein from Schizosaccharomyces pombe (strain 972 / ATCC 24843) (Fission yeast).